Consider the following 231-residue polypeptide: Potassium/proton antiporter CemA (231 aa).

4 helical membrane passes run 7 to 27 (FISL…SLSF), 116 to 136 (IISF…LIFL), 156 to 176 (ILLL…ELMI), and 191 to 211 (IISG…KYWI).

The protein belongs to the CemA family.

It localises to the plastid. Its subcellular location is the chloroplast inner membrane. It catalyses the reaction K(+)(in) + H(+)(out) = K(+)(out) + H(+)(in). Contributes to K(+)/H(+) antiport activity by supporting proton efflux to control proton extrusion and homeostasis in chloroplasts in a light-dependent manner to modulate photosynthesis. Prevents excessive induction of non-photochemical quenching (NPQ) under continuous-light conditions. Indirectly promotes efficient inorganic carbon uptake into chloroplasts. The chain is Potassium/proton antiporter CemA from Morus indica (Mulberry).